Consider the following 302-residue polypeptide: Protein FdhE homolog (302 aa).

Belongs to the FdhE family.

It is found in the cytoplasm. In terms of biological role, necessary for formate dehydrogenase activity. The protein is Protein FdhE homolog of Shewanella sp. (strain MR-4).